The sequence spans 666 residues: Putative L-type lectin-domain containing receptor kinase V.1 (666 aa).

Residues 1 to 18 (MVLLLFLVLFFVPESVVC) form the signal peptide. Over 19 to 289 (QRPNPNGVEF…WIQSPNGILT (271 aa)) the chain is Extracellular. The interval 27–257 (EFNTSGNMYT…SHYILGWTFK (231 aa)) is legume-lectin like. Residues N29, N74, N123, N176, N204, and N259 are each glycosylated (N-linked (GlcNAc...) asparagine). Residues 290–310 (ISLTVSGVIILIILSLSLWLF) form a helical membrane-spanning segment. Residues 311 to 666 (LKRKKLLEVL…FTESFVSHGR (356 aa)) are Cytoplasmic-facing. The Protein kinase domain maps to 344–625 (FKDTEVLGKG…SVAQLPHNLL (282 aa)). ATP is bound by residues 350–358 (LGKGGFGKV) and K373. The active-site Proton acceptor is D469.

In the C-terminal section; belongs to the protein kinase superfamily. Ser/Thr protein kinase family. It in the N-terminal section; belongs to the leguminous lectin family.

It is found in the cell membrane. It carries out the reaction L-seryl-[protein] + ATP = O-phospho-L-seryl-[protein] + ADP + H(+). The catalysed reaction is L-threonyl-[protein] + ATP = O-phospho-L-threonyl-[protein] + ADP + H(+). This is Putative L-type lectin-domain containing receptor kinase V.1 (LECRK51) from Arabidopsis thaliana (Mouse-ear cress).